We begin with the raw amino-acid sequence, 86 residues long: BolA-like protein 2 (86 aa).

Met-1 is subject to N-acetylmethionine.

The protein belongs to the BolA/IbaG family. As to quaternary structure, interacts with GLRX3; forms a heterotrimeric complex composed by two BOLA2 molecules and one GLRX3 molecule; linked by [2Fe-2S] clusters.

It is found in the cytoplasm. The protein localises to the nucleus. In terms of biological role, acts as a cytosolic iron-sulfur (Fe-S) cluster assembly factor that facilitates [2Fe-2S] cluster insertion into a subset of cytosolic proteins. Acts together with the monothiol glutaredoxin GLRX3. The polypeptide is BolA-like protein 2 (BOLA2) (Homo sapiens (Human)).